The chain runs to 273 residues: Exosome complex component Rrp42 (273 aa).

Belongs to the RNase PH family. Rrp42 subfamily. Component of the archaeal exosome complex. Forms a hexameric ring-like arrangement composed of 3 Rrp41-Rrp42 heterodimers. The hexameric ring associates with a trimer of Rrp4 and/or Csl4 subunits.

It is found in the cytoplasm. Functionally, non-catalytic component of the exosome, which is a complex involved in RNA degradation. Contributes to the structuring of the Rrp41 active site. This chain is Exosome complex component Rrp42, found in Thermococcus gammatolerans (strain DSM 15229 / JCM 11827 / EJ3).